The sequence spans 72 residues: DNA-directed RNA polymerase subunit Rpo10 (72 aa).

Positions 7, 10, 54, and 55 each coordinate Zn(2+).

Belongs to the archaeal Rpo10/eukaryotic RPB10 RNA polymerase subunit family. Part of the RNA polymerase complex. Requires Zn(2+) as cofactor.

Its subcellular location is the cytoplasm. The catalysed reaction is RNA(n) + a ribonucleoside 5'-triphosphate = RNA(n+1) + diphosphate. Functionally, DNA-dependent RNA polymerase (RNAP) catalyzes the transcription of DNA into RNA using the four ribonucleoside triphosphates as substrates. This chain is DNA-directed RNA polymerase subunit Rpo10, found in Picrophilus torridus (strain ATCC 700027 / DSM 9790 / JCM 10055 / NBRC 100828 / KAW 2/3).